The chain runs to 112 residues: Peptidyl-tRNA hydrolase (112 aa).

A disordered region spans residues 64–99; the sequence is EEAKRAGLPTGLISDAGRTQLEPGTPTALAIGPAPD.

This sequence belongs to the PTH2 family.

The protein resides in the cytoplasm. The catalysed reaction is an N-acyl-L-alpha-aminoacyl-tRNA + H2O = an N-acyl-L-amino acid + a tRNA + H(+). The natural substrate for this enzyme may be peptidyl-tRNAs which drop off the ribosome during protein synthesis. This is Peptidyl-tRNA hydrolase from Halobacterium salinarum (strain ATCC 29341 / DSM 671 / R1).